The following is a 303-amino-acid chain: Protoheme IX farnesyltransferase (303 aa).

Helical transmembrane passes span 26–46, 48–68, 98–118, 120–140, 148–168, 174–194, 221–241, 244–264, and 278–298; these read VVAL…PGMV, IDIL…AAAV, AILF…VWVN, LTAW…TFWL, IVIG…AVTG, ALLL…ALAV, ILLY…THML, LYLL…VAMM, and YSIV…YLLP.

It belongs to the UbiA prenyltransferase family. Protoheme IX farnesyltransferase subfamily.

It is found in the cell inner membrane. The catalysed reaction is heme b + (2E,6E)-farnesyl diphosphate + H2O = Fe(II)-heme o + diphosphate. Its pathway is porphyrin-containing compound metabolism; heme O biosynthesis; heme O from protoheme: step 1/1. Converts heme B (protoheme IX) to heme O by substitution of the vinyl group on carbon 2 of heme B porphyrin ring with a hydroxyethyl farnesyl side group. This Saccharophagus degradans (strain 2-40 / ATCC 43961 / DSM 17024) protein is Protoheme IX farnesyltransferase.